We begin with the raw amino-acid sequence, 815 residues long: Ferripyoverdine receptor (815 aa).

The N-terminal stretch at 1 to 43 is a signal peptide; sequence MPAPHGLSPLSKAFLMRRAFQRRILPHSLAMALSLPLAGYVQA. The region spanning 161–271 is the TBDR plug domain; the sequence is TPRETPQSIT…LGATINLIRK (111 aa). The TBDR beta-barrel domain occupies 276 to 815; it reads EFKGHVELGA…NLMFSTRWDF (540 aa). The TonB C-terminal box motif lies at 798–815; that stretch reads SASYGDPRNLMFSTRWDF.

This sequence belongs to the TonB-dependent receptor family.

It is found in the cell outer membrane. Receptor for the siderophore ferripyoverdine. In Pseudomonas aeruginosa (strain ATCC 15692 / DSM 22644 / CIP 104116 / JCM 14847 / LMG 12228 / 1C / PRS 101 / PAO1), this protein is Ferripyoverdine receptor (fpvA).